A 243-amino-acid chain; its full sequence is Nuclear ubiquitous casein and cyclin-dependent kinase substrate 1 (243 aa).

The tract at residues Met1–Asp243 is disordered. At Tyr13 the chain carries Phosphotyrosine. Residues Ser14 and Ser19 each carry the phosphoserine modification. Phosphotyrosine is present on Tyr26. Over residues Lys35–Gly51 the composition is skewed to basic residues. Phosphoserine is present on residues Ser54, Ser58, Ser61, Ser73, Ser75, and Ser79. Basic and acidic residues predominate over residues Lys64–Glu77. The span at Gln91–Ala100 shows a compositional bias: low complexity. Residues Val111–Pro124 show a composition bias toward acidic residues. Phosphoserine is present on residues Ser113, Ser130, Ser132, and Ser144. The span at Ser132 to Asp145 shows a compositional bias: acidic residues. A compositionally biased stretch (basic residues) spans Ser149–Leu174. At Thr179 the chain carries Phosphothreonine. At Ser181 the chain carries Phosphoserine. Residues Thr197–Lys206 are compositionally biased toward basic and acidic residues. Position 202 is a phosphothreonine (Thr202). Ser204, Ser214, Ser223, Ser229, Ser234, and Ser240 each carry phosphoserine. Residues Glu232–Asp243 show a composition bias toward acidic residues.

In terms of assembly, does not interact with RAD51. Post-translationally, phosphorylated in an ATM-dependent manner in response to DNA damage. Phosphorylated by CDK1 and casein kinase.

It localises to the nucleus. Its subcellular location is the chromosome. In terms of biological role, chromatin-associated protein involved in DNA repair by promoting homologous recombination (HR). Binds double-stranded DNA (dsDNA) and secondary DNA structures, such as D-loop structures, but with less affinity than RAD51AP1. The polypeptide is Nuclear ubiquitous casein and cyclin-dependent kinase substrate 1 (Rattus norvegicus (Rat)).